A 262-amino-acid polypeptide reads, in one-letter code: PsbP domain-containing protein 6, chloroplastic (262 aa).

Cys128 and Cys132 are joined by a disulfide.

It belongs to the PsbP family.

The protein localises to the plastid. It is found in the chloroplast thylakoid lumen. Functionally, may be involved in the redox regulation of photosystem II. The polypeptide is PsbP domain-containing protein 6, chloroplastic (PPD6) (Arabidopsis thaliana (Mouse-ear cress)).